Here is a 249-residue protein sequence, read N- to C-terminus: Proteasome subunit alpha type-3 (249 aa).

Ser2 is modified (N-acetylserine). 2 positions are modified to O-acetylserine: Ser214 and Ser220. A Glycyl lysine isopeptide (Lys-Gly) (interchain with G-Cter in ubiquitin) cross-link involves residue Lys221.

This sequence belongs to the peptidase T1A family. In terms of assembly, component of the 20S core complex of the 26S proteasome. The 26S proteasome is composed of a core protease (CP), known as the 20S proteasome, capped at one or both ends by the 19S regulatory particle (RP/PA700). The 20S proteasome core is composed of 28 subunits that are arranged in four stacked rings, resulting in a barrel-shaped structure. The two end rings are each formed by seven alpha subunits, and the two central rings are each formed by seven beta subunits. The catalytic chamber with the active sites is on the inside of the barrel. In terms of tissue distribution, ubiquitous low levels.

It is found in the cytoplasm. The protein resides in the nucleus. Its function is as follows. The proteasome is a multicatalytic proteinase complex which is characterized by its ability to cleave peptides with Arg, Phe, Tyr, Leu, and Glu adjacent to the leaving group at neutral or slightly basic pH. The proteasome has an ATP-dependent proteolytic activity. This chain is Proteasome subunit alpha type-3 (PAG1), found in Arabidopsis thaliana (Mouse-ear cress).